Here is a 336-residue protein sequence, read N- to C-terminus: Holliday junction branch migration complex subunit RuvB (336 aa).

A large ATPase domain (RuvB-L) region spans residues 4-184 (ADRLISAGAT…FGIVQRLEFY (181 aa)). ATP is bound by residues Ile23, Arg24, Gly65, Lys68, Thr69, Thr70, 131–133 (EDY), Arg174, Tyr184, and Arg221. Thr69 contacts Mg(2+). The tract at residues 185–255 (QVPDLQHIVG…IAAQALDMLN (71 aa)) is small ATPAse domain (RuvB-S). Residues 258–336 (AEGFDYMDRK…HFGITPPEMP (79 aa)) are head domain (RuvB-H). DNA-binding residues include Arg294, Arg313, and Arg318.

This sequence belongs to the RuvB family. As to quaternary structure, homohexamer. Forms an RuvA(8)-RuvB(12)-Holliday junction (HJ) complex. HJ DNA is sandwiched between 2 RuvA tetramers; dsDNA enters through RuvA and exits via RuvB. An RuvB hexamer assembles on each DNA strand where it exits the tetramer. Each RuvB hexamer is contacted by two RuvA subunits (via domain III) on 2 adjacent RuvB subunits; this complex drives branch migration. In the full resolvosome a probable DNA-RuvA(4)-RuvB(12)-RuvC(2) complex forms which resolves the HJ.

The protein localises to the cytoplasm. The catalysed reaction is ATP + H2O = ADP + phosphate + H(+). The RuvA-RuvB-RuvC complex processes Holliday junction (HJ) DNA during genetic recombination and DNA repair, while the RuvA-RuvB complex plays an important role in the rescue of blocked DNA replication forks via replication fork reversal (RFR). RuvA specifically binds to HJ cruciform DNA, conferring on it an open structure. The RuvB hexamer acts as an ATP-dependent pump, pulling dsDNA into and through the RuvAB complex. RuvB forms 2 homohexamers on either side of HJ DNA bound by 1 or 2 RuvA tetramers; 4 subunits per hexamer contact DNA at a time. Coordinated motions by a converter formed by DNA-disengaged RuvB subunits stimulates ATP hydrolysis and nucleotide exchange. Immobilization of the converter enables RuvB to convert the ATP-contained energy into a lever motion, pulling 2 nucleotides of DNA out of the RuvA tetramer per ATP hydrolyzed, thus driving DNA branch migration. The RuvB motors rotate together with the DNA substrate, which together with the progressing nucleotide cycle form the mechanistic basis for DNA recombination by continuous HJ branch migration. Branch migration allows RuvC to scan DNA until it finds its consensus sequence, where it cleaves and resolves cruciform DNA. This chain is Holliday junction branch migration complex subunit RuvB, found in Salmonella arizonae (strain ATCC BAA-731 / CDC346-86 / RSK2980).